The chain runs to 496 residues: Probable glycine betaine transporter (496 aa).

The next 12 helical transmembrane spans lie at 11–31 (TVLY…VFLP), 49–69 (FGWL…GIAI), 89–109 (FQWF…FWSV), 136–156 (VVFF…GLAL), 188–208 (AIDI…LGLG), 219–239 (IWGI…ITVI), 260–280 (VWLS…VFIL), 306–326 (WVGG…PFVG), 341–361 (FVFA…AIYG), 396–416 (LYAI…VGAA), 441–461 (FWGI…GTAA), and 468–488 (ASIA…YSIL).

It belongs to the BCCT transporter (TC 2.A.15) family.

The protein localises to the cell membrane. Its function is as follows. Probably acts in the uptake of glycine betaine. May function in the pathway that allows anaerobic methylotrophic growth of D.hafniense using glycine betaine. The sequence is that of Probable glycine betaine transporter from Desulfitobacterium hafniense (strain Y51).